We begin with the raw amino-acid sequence, 82 residues long: Cytochrome b559 subunit alpha (82 aa).

Residues 21–35 (VIHSITIPALFIAGW) form a helical membrane-spanning segment. His23 lines the heme pocket.

It belongs to the PsbE/PsbF family. Heterodimer of an alpha subunit and a beta subunit. PSII is composed of 1 copy each of membrane proteins PsbA, PsbB, PsbC, PsbD, PsbE, PsbF, PsbH, PsbI, PsbJ, PsbK, PsbL, PsbM, PsbT, PsbX, PsbY, PsbZ, Psb30/Ycf12, peripheral proteins PsbO, CyanoQ (PsbQ), PsbU, PsbV and a large number of cofactors. It forms dimeric complexes. The cofactor is heme b.

The protein localises to the cellular thylakoid membrane. Its function is as follows. This b-type cytochrome is tightly associated with the reaction center of photosystem II (PSII). PSII is a light-driven water:plastoquinone oxidoreductase that uses light energy to abstract electrons from H(2)O, generating O(2) and a proton gradient subsequently used for ATP formation. It consists of a core antenna complex that captures photons, and an electron transfer chain that converts photonic excitation into a charge separation. The sequence is that of Cytochrome b559 subunit alpha from Nostoc sp. (strain PCC 7120 / SAG 25.82 / UTEX 2576).